The chain runs to 60 residues: UPF0434 protein Dtpsy_1553 (60 aa).

It belongs to the UPF0434 family.

The protein is UPF0434 protein Dtpsy_1553 of Acidovorax ebreus (strain TPSY) (Diaphorobacter sp. (strain TPSY)).